The chain runs to 260 residues: uncharacterized protein (260 aa).

The 228-residue stretch at 4–231 folds into the ABC transporter domain; that stretch reads LHVDHVTHTY…PKELAAMLPF (228 aa). 40–47 is an ATP binding site; the sequence is GPSGCGKT.

It belongs to the ABC transporter superfamily.

This is an uncharacterized protein from Bacillus subtilis (strain 168).